Consider the following 450-residue polypeptide: tRNA-2-methylthio-N(6)-dimethylallyladenosine synthase (450 aa).

An MTTase N-terminal domain is found at Lys2–Arg119. Positions 11, 48, 82, 156, 160, and 163 each coordinate [4Fe-4S] cluster. One can recognise a Radical SAM core domain in the interval Arg142 to Arg375. The 71-residue stretch at Gln378–Val448 folds into the TRAM domain.

This sequence belongs to the methylthiotransferase family. MiaB subfamily. As to quaternary structure, monomer. [4Fe-4S] cluster is required as a cofactor.

It localises to the cytoplasm. It catalyses the reaction N(6)-dimethylallyladenosine(37) in tRNA + (sulfur carrier)-SH + AH2 + 2 S-adenosyl-L-methionine = 2-methylsulfanyl-N(6)-dimethylallyladenosine(37) in tRNA + (sulfur carrier)-H + 5'-deoxyadenosine + L-methionine + A + S-adenosyl-L-homocysteine + 2 H(+). Its function is as follows. Catalyzes the methylthiolation of N6-(dimethylallyl)adenosine (i(6)A), leading to the formation of 2-methylthio-N6-(dimethylallyl)adenosine (ms(2)i(6)A) at position 37 in tRNAs that read codons beginning with uridine. The sequence is that of tRNA-2-methylthio-N(6)-dimethylallyladenosine synthase from Cupriavidus taiwanensis (strain DSM 17343 / BCRC 17206 / CCUG 44338 / CIP 107171 / LMG 19424 / R1) (Ralstonia taiwanensis (strain LMG 19424)).